The following is a 674-amino-acid chain: Fidgetin-like protein 1 (674 aa).

A disordered region spans residues 157–179; the sequence is SQESDSLPNSAHDRDRTQDFPES. Basic and acidic residues predominate over residues 167–179; the sequence is AHDRDRTQDFPES. A Glycyl lysine isopeptide (Lys-Gly) (interchain with G-Cter in SUMO2) cross-link involves residue Lys-225. Ser-259 bears the Phosphoserine mark. A necessary and sufficient for interaction with RAD51 region spans residues 295–344; sequence FKTAKEQLWVDQQKKYHQPQRASGSSYGGVKKSLGASRSRGILGKFVPPI. Residue Lys-339 is modified to N6-acetyllysine. Residues Ala-404 and 444–449 contribute to the ATP site; that span reads GTGKTL.

It belongs to the AAA ATPase family. In terms of assembly, hexamer. Interacts (via N-terminal one-half region) with RAD51; the interaction is direct. Interacts (via N-terminal one-half region) with SPIDR (via the C-terminal region); the interaction is direct. Interacts with FIRRM; may regulate homologous recombination. Mg(2+) serves as cofactor.

It is found in the nucleus. It localises to the cytoplasm. Its subcellular location is the perinuclear region. The enzyme catalyses ATP + H2O = ADP + phosphate + H(+). Functionally, involved in DNA double-strand break (DBS) repair via homologous recombination (HR). Recruited at DSB sites independently of BRCA2, RAD51 and RAD51 paralogs in a H2AX-dependent manner. May regulate osteoblast proliferation and differentiation. May play a role in the control of male meiosis dynamic. This Homo sapiens (Human) protein is Fidgetin-like protein 1 (FIGNL1).